We begin with the raw amino-acid sequence, 60 residues long: Large ribosomal subunit protein bL32 (60 aa).

The protein belongs to the bacterial ribosomal protein bL32 family.

In Kosmotoga olearia (strain ATCC BAA-1733 / DSM 21960 / TBF 19.5.1), this protein is Large ribosomal subunit protein bL32.